Here is an 804-residue protein sequence, read N- to C-terminus: Cell surface sensor MSB2 (804 aa).

An N-terminal signal peptide occupies residues 1 to 20; sequence MHNFSKLAVAFVAAASFASA. Residues 21 to 694 are Extracellular-facing; it reads EPETKAKVER…TNQSATQRGT (674 aa). Asparagine 45 carries N-linked (GlcNAc...) asparagine glycosylation. Low complexity-rich tracts occupy residues 46-58 and 69-80; these read TTTP…SSTS and SSFSSSASSSSA. Disordered regions lie at residues 46–90 and 105–220; these read TTTP…RQPT and TDST…ATSN. Residues 46-475 form a serine/threonine rich region (STR) region; it reads TTTPASEASS…SVAPTSATSS (430 aa). Composition is skewed to polar residues over residues 81–90 and 109–126; these read QELTASRQPT and PFSQ…SATG. 2 stretches are compositionally biased toward low complexity: residues 128–143 and 150–169; these read VTPI…PSTA and SALT…SVTS. Asparagine 157 is a glycosylation site (N-linked (GlcNAc...) asparagine). Over residues 170 to 188 the composition is skewed to polar residues; the sequence is PGSTSGPAGTPESSSASDF. The span at 189–202 shows a compositional bias: low complexity; it reads TSAVATSRASTATS. N-linked (GlcNAc...) asparagine glycans are attached at residues asparagine 298, asparagine 308, asparagine 357, and asparagine 393. Residues 345–394 show a composition bias toward polar residues; sequence VQTLPPVSTPTANGTVTSPPVDSQTTVLPTTTPGLSSDTIVTSPGVTANS. Residues 345 to 516 form a disordered region; sequence VQTLPPVSTP…APTVLPSDLP (172 aa). Low complexity-rich tracts occupy residues 395–407 and 427–476; these read TQVP…TIPT and NNTV…TSSA. Residues asparagine 427 and asparagine 433 are each glycosylated (N-linked (GlcNAc...) asparagine). Residues 482–641 form an HKR11-MSB2 homology domain (HMH) region; the sequence is WLPTTIIVQA…NGMLAHNLTM (160 aa). Residues 493-508 show a composition bias toward polar residues; the sequence is LPSTTGSSTNAPSSAP. Asparagine 629, asparagine 638, asparagine 669, asparagine 683, and asparagine 686 each carry an N-linked (GlcNAc...) asparagine glycan. The segment at 658–689 is disordered; sequence KPAGAGSGTGGNGSNGPNDVFNNDNNSTNQSA. Residues 660-671 show a composition bias toward gly residues; sequence AGAGSGTGGNGS. Low complexity predominate over residues 672 to 686; the sequence is NGPNDVFNNDNNSTN. Residues 695-715 traverse the membrane as a helical segment; that stretch reads VAGIAFGAVSLAAAYGAAMFI. Over 716–804 the chain is Cytoplasmic; the sequence is VARRYKKKRQ…VAQENSLGWN (89 aa). 2 disordered regions span residues 724–748 and 762–804; these read RQAH…PALM and GVMG…LGWN. Positions 731-744 are enriched in polar residues; that stretch reads SSVATPSEMRQSGS. Residues 774–787 are compositionally biased toward low complexity; that stretch reads GSNGSGRSAGNSAR.

The protein belongs to the HKR1/MSB2 family.

The protein localises to the cell membrane. The protein resides in the vacuole membrane. Functionally, MSB2 and SHO1 have overlapping functions in recognizing various surface signals for MAPK PMK1 activation and appressorium formation. While MSB2 is critical for sensing surface hydrophobicity and cutin monomers, SHO1 may play a more important role in recognizing rice leaf waxes. This Pyricularia oryzae (strain 70-15 / ATCC MYA-4617 / FGSC 8958) (Rice blast fungus) protein is Cell surface sensor MSB2.